A 40-amino-acid polypeptide reads, in one-letter code: Trypsin inhibitor (40 aa).

As to quaternary structure, monomer.

It carries out the reaction Preferential cleavage: Arg-|-Xaa, Lys-|-Xaa.. In terms of biological role, inhibits trypsin but not chymotrypsin, papain or porcine pancreatic alpha-amylase. Has insecticidal activity against A.aegypti. Functions by inhibiting the A.aegypti midgut proteases to reduce the survival of larva and adults. The sequence is that of Trypsin inhibitor from Cassia leiandra (Marimari).